The chain runs to 580 residues: Probable inactive 1-aminocyclopropane-1-carboxylate synthase-like protein 2 (580 aa).

Residues M1 to K43 form a disordered region. Residues E7 to S23 show a composition bias toward polar residues. K417 carries the N6-(pyridoxal phosphate)lysine modification.

This sequence belongs to the class-I pyridoxal-phosphate-dependent aminotransferase family.

The sequence is that of Probable inactive 1-aminocyclopropane-1-carboxylate synthase-like protein 2 (Accsl) from Mus musculus (Mouse).